The sequence spans 261 residues: MSRRYDSRTTIFSPEGRLYQVEYAMEAIGHAGTCLGILANDGVLLAAERRNIHKLLDEVFFSEKIYKLNEDMACSVAGITSDANVLTNELRLIAQRYLLQYQEPIPCEQLVTALCDIKQAYTQFGGKRPFGVSLLYIGWDKHYGFQLYQSDPNGNYGGWKATCIGNNSAAAVSMLKQDYKEGEMTLKSALALAIKVLNKTMDVSKLSAEKVEIATLTRENGKTVIRVLKQKEVEQLIKKHEEEEAKAEREKKEKEQKEKDK.

Phosphoserine is present on residues Ser13 and Ser75. Lys127 carries the post-translational modification N6-acetyllysine. Ser173 carries the post-translational modification Phosphoserine. Lys176 carries the post-translational modification N6-acetyllysine. Positions 240–261 are disordered; sequence HEEEEAKAEREKKEKEQKEKDK.

The protein belongs to the peptidase T1A family. In terms of assembly, the 26S proteasome consists of a 20S proteasome core and two 19S regulatory subunits. The 20S proteasome core is a barrel-shaped complex made of 28 subunits that are arranged in four stacked rings. The two outer rings are each formed by seven alpha subunits, and the two inner rings are formed by seven beta subunits. The proteolytic activity is exerted by three beta-subunits PSMB5, PSMB6 and PSMB7.

The protein resides in the cytoplasm. It localises to the nucleus. Component of the 20S core proteasome complex involved in the proteolytic degradation of most intracellular proteins. This complex plays numerous essential roles within the cell by associating with different regulatory particles. Associated with two 19S regulatory particles, forms the 26S proteasome and thus participates in the ATP-dependent degradation of ubiquitinated proteins. The 26S proteasome plays a key role in the maintenance of protein homeostasis by removing misfolded or damaged proteins that could impair cellular functions, and by removing proteins whose functions are no longer required. Associated with the PA200 or PA28, the 20S proteasome mediates ubiquitin-independent protein degradation. This type of proteolysis is required in several pathways including spermatogenesis (20S-PA200 complex) or generation of a subset of MHC class I-presented antigenic peptides (20S-PA28 complex). This Macaca fascicularis (Crab-eating macaque) protein is Proteasome subunit alpha type-4 (PSMA4).